The sequence spans 343 residues: MIKLFHINKIFQQGARSINALSDISLHVPQGQIYGVIGSSGAGKSTLIRCVNMLERPTSGQVLVNGQDLTILSDSDLTRARRRIGMIFQHFNLLSSRTVFGNIALPLELDNIPKAEIKKRVDELLELVGLTDKHDAYPANLSGGQKQRVAIARALANSPKVLLCDEATSALDPATTRSILELLKDINRRLGLTILLITHEMDVVKRICDQVAVISGGQLIEQDIVSEVFSHPKTPIAQAFIQSTLHLDIPEDYVQKMQSHPAPNLSPLLKLEFTGQSVDAPLISMAVRRFNIDMNILSSQIDYAGGVKFGVMLAELHGENGGVESTIKFLQDHHVKVEVLGYV.

The region spanning 2–241 is the ABC transporter domain; the sequence is IKLFHINKIF…PKTPIAQAFI (240 aa). 38-45 lines the ATP pocket; that stretch reads GSSGAGKS.

This sequence belongs to the ABC transporter superfamily. Methionine importer (TC 3.A.1.24) family. The complex is composed of two ATP-binding proteins (MetN), two transmembrane proteins (MetI) and a solute-binding protein (MetQ).

It is found in the cell inner membrane. The catalysed reaction is L-methionine(out) + ATP + H2O = L-methionine(in) + ADP + phosphate + H(+). It catalyses the reaction D-methionine(out) + ATP + H2O = D-methionine(in) + ADP + phosphate + H(+). Part of the ABC transporter complex MetNIQ involved in methionine import. Responsible for energy coupling to the transport system. The protein is Methionine import ATP-binding protein MetN of Photorhabdus laumondii subsp. laumondii (strain DSM 15139 / CIP 105565 / TT01) (Photorhabdus luminescens subsp. laumondii).